Reading from the N-terminus, the 541-residue chain is Chaperonin GroEL (541 aa).

Residues 29–32 (TIGP), 86–90 (DGTTT), G413, 478–480 (NAA), and D494 each bind ATP.

Belongs to the chaperonin (HSP60) family. In terms of assembly, forms a cylinder of 14 subunits composed of two heptameric rings stacked back-to-back. Interacts with the co-chaperonin GroES.

It localises to the cytoplasm. The enzyme catalyses ATP + H2O + a folded polypeptide = ADP + phosphate + an unfolded polypeptide.. Functionally, together with its co-chaperonin GroES, plays an essential role in assisting protein folding. The GroEL-GroES system forms a nano-cage that allows encapsulation of the non-native substrate proteins and provides a physical environment optimized to promote and accelerate protein folding. The sequence is that of Chaperonin GroEL from Oenococcus oeni (strain ATCC BAA-331 / PSU-1).